A 236-amino-acid polypeptide reads, in one-letter code: 15,16-dihydrobiliverdin:ferredoxin oxidoreductase (236 aa).

This sequence belongs to the HY2 family.

The enzyme catalyses 15,16-dihydrobiliverdin + oxidized 2[4Fe-4S]-[ferredoxin] = biliverdin IXalpha + reduced 2[4Fe-4S]-[ferredoxin] + 2 H(+). Its function is as follows. Catalyzes the two-electron reduction of biliverdin IX-alpha at the C15 methine bridge. This chain is 15,16-dihydrobiliverdin:ferredoxin oxidoreductase (pebA), found in Synechococcus sp. (strain WH8020).